We begin with the raw amino-acid sequence, 195 residues long: Sec-independent protein translocase protein TatB (195 aa).

The helical transmembrane segment at methionine 1–glycine 21 threads the bilayer. The interval glutamate 130 to proline 195 is disordered. Low complexity-rich tracts occupy residues proline 145–proline 157 and threonine 175–proline 195.

It belongs to the TatB family. In terms of assembly, the Tat system comprises two distinct complexes: a TatABC complex, containing multiple copies of TatA, TatB and TatC subunits, and a separate TatA complex, containing only TatA subunits. Substrates initially bind to the TatABC complex, which probably triggers association of the separate TatA complex to form the active translocon.

The protein resides in the cell inner membrane. Part of the twin-arginine translocation (Tat) system that transports large folded proteins containing a characteristic twin-arginine motif in their signal peptide across membranes. Together with TatC, TatB is part of a receptor directly interacting with Tat signal peptides. TatB may form an oligomeric binding site that transiently accommodates folded Tat precursor proteins before their translocation. The sequence is that of Sec-independent protein translocase protein TatB from Xanthomonas campestris pv. campestris (strain 8004).